The following is a 260-amino-acid chain: Methyl-coenzyme M reductase subunit gamma (260 aa).

A coenzyme M-binding site is contributed by Arg-123.

Belongs to the methyl-coenzyme M reductase gamma subunit family. As to quaternary structure, MCR is a hexamer of two alpha, two beta, and two gamma chains, forming a dimer of heterotrimers. It depends on coenzyme F430 as a cofactor.

The protein localises to the cytoplasm. The catalysed reaction is coenzyme B + methyl-coenzyme M = methane + coenzyme M-coenzyme B heterodisulfide. It participates in one-carbon metabolism; methyl-coenzyme M reduction; methane from methyl-coenzyme M: step 1/1. In terms of biological role, component of the methyl-coenzyme M reductase (MCR) I that catalyzes the reductive cleavage of methyl-coenzyme M (CoM-S-CH3 or 2-(methylthio)ethanesulfonate) using coenzyme B (CoB or 7-mercaptoheptanoylthreonine phosphate) as reductant which results in the production of methane and the mixed heterodisulfide of CoB and CoM (CoM-S-S-CoB). This is the final step in methanogenesis. The chain is Methyl-coenzyme M reductase subunit gamma (mcrG) from Methanococcus vannielii.